The primary structure comprises 542 residues: Keratin, type II cytoskeletal 75 (542 aa).

The span at 1–26 (MSRQSTVTFHSGSRRGFSTASATTPT) shows a compositional bias: polar residues. The disordered stretch occupies residues 1–44 (MSRQSTVTFHSGSRRGFSTASATTPTAGRSRFSSVSVARSSGNS). The interval 1 to 139 (MSRQSTVTFH…DPTIQRVRKE (139 aa)) is head. A compositionally biased stretch (low complexity) spans 27–42 (AGRSRFSSVSVARSSG). The segment at 140–175 (EREQIKTLNNKFASFIDKVRFLEQQNKVLETKWNLL) is coil 1A. The region spanning 140-453 (EREQIKTLNN…KLLEGEECRL (314 aa)) is the IF rod domain. The interval 176–194 (QEQGSRTVRQNLEPFFDAY) is linker 1. The coil 1B stretch occupies residues 195–287 (VNDLRRQLDS…VYEAELSQMQ (93 aa)). The interval 288–310 (NQVSDTSVVLSMDNNRSLDLDSI) is linker 12. Positions 311-449 (IAEVKAQYED…ATYRKLLEGE (139 aa)) are coil 2. Residues 450 to 542 (ECRLSGEGVS…TSSSRKSYKH (93 aa)) form a tail region. Residues 514-542 (TSSSRGPVGSGSSIKFVSSTSSSRKSYKH) form a disordered region.

The protein belongs to the intermediate filament family. As to quaternary structure, heterodimer of a type I and a type II keratin. May associate with KRT17.

In terms of biological role, plays a central role in hair and nail formation. Essential component of keratin intermediate filaments in the companion layer of the hair follicle. This chain is Keratin, type II cytoskeletal 75 (Krt75), found in Rattus norvegicus (Rat).